Here is a 347-residue protein sequence, read N- to C-terminus: NADH-ubiquinone oxidoreductase chain 2 (347 aa).

The next 11 helical transmembrane spans lie at proline 3–glycine 23, histidine 25–methionine 45, tyrosine 59–methionine 79, isoleucine 96–proline 116, glycine 127–proline 147, glycine 148–glycine 168, isoleucine 178–proline 198, threonine 201–isoleucine 221, threonine 247–isoleucine 267, isoleucine 276–leucine 296, and leucine 325–isoleucine 345.

This sequence belongs to the complex I subunit 2 family. Core subunit of respiratory chain NADH dehydrogenase (Complex I) which is composed of 45 different subunits. Interacts with TMEM242.

The protein localises to the mitochondrion inner membrane. It catalyses the reaction a ubiquinone + NADH + 5 H(+)(in) = a ubiquinol + NAD(+) + 4 H(+)(out). Functionally, core subunit of the mitochondrial membrane respiratory chain NADH dehydrogenase (Complex I) which catalyzes electron transfer from NADH through the respiratory chain, using ubiquinone as an electron acceptor. Essential for the catalytic activity and assembly of complex I. This chain is NADH-ubiquinone oxidoreductase chain 2, found in Ozimops beccarii (Beccari's free-tailed bat).